The sequence spans 128 residues: Sulfurtransferase TusD (128 aa).

C78 (cysteine persulfide intermediate) is an active-site residue.

The protein belongs to the DsrE/TusD family. As to quaternary structure, heterohexamer, formed by a dimer of trimers. The hexameric TusBCD complex contains 2 copies each of TusB, TusC and TusD. The TusBCD complex interacts with TusE.

The protein localises to the cytoplasm. In terms of biological role, part of a sulfur-relay system required for 2-thiolation of 5-methylaminomethyl-2-thiouridine (mnm(5)s(2)U) at tRNA wobble positions. Accepts sulfur from TusA and transfers it in turn to TusE. The sequence is that of Sulfurtransferase TusD from Escherichia fergusonii (strain ATCC 35469 / DSM 13698 / CCUG 18766 / IAM 14443 / JCM 21226 / LMG 7866 / NBRC 102419 / NCTC 12128 / CDC 0568-73).